We begin with the raw amino-acid sequence, 317 residues long: Probable pathogenesis-related protein CaO19.6200 (317 aa).

A signal peptide spans 1–23 (MKFLQSFPVILAVFSFAANLVSS). 2 disordered regions span residues 52–116 (RLET…TTVT) and 155–179 (PSAP…DSQL). Positions 58–76 (PTSTTTTIVIPSSKPSSPE) are enriched in low complexity. 2 stretches are compositionally biased toward polar residues: residues 84-116 (QPMF…TTVT) and 168-179 (ENNSGTNDDSQL). The N-linked (GlcNAc...) asparagine glycan is linked to N169. One can recognise an SCP domain in the interval 187-297 (LEAHNIKRAS…GWGLYIICNY (111 aa)).

It belongs to the CRISP family.

The protein localises to the secreted. Secreted protein that acts as a virulence factor during infections. This Candida albicans (strain SC5314 / ATCC MYA-2876) (Yeast) protein is Probable pathogenesis-related protein CaO19.6200.